Reading from the N-terminus, the 467-residue chain is MSSLTDSQVNDLHCSIYRYVQWVSQNNGSSDLLNKLQSVLDIDELQLSLDDGDQMLLPKKWGSIIRLQRAITKLEQKCDALQQELDDKTKQLETIVPKDTQIATTTDVNWLPPDHIYASIQNESPVTAIKLHPSLAIVYVGTDTGRLIAYDILNYTIPLAVTTAHSKAITSIEVIEAHNFEEFIDSTTLVSTTSKDAQINVYDHSSNTGELKLIRSFNAHDSTVSSQKTWQKDNDVLLASSSRDATVKVWRVNDSRCLQSFSPHSEWVKSIDVLDEYILSGSLDSTLRLTHWPSGNGLSVGTGHEFPIERVLIIPFSDSKICTSPYRDQNEHSAFAPLRFKYCASAARDNTIKIWEVPLPQLKPNSAPVPSTTNTTFKCVMTLRGHTSWVKDLKLRGDHLFSCSDDETIKCWDLNTGNCVKTWSSIHNNFINCIDIDREATIEQFSPSLQREILVSGDMDNKVKIIR.

The stretch at 62–96 (GSIIRLQRAITKLEQKCDALQQELDDKTKQLETIV) forms a coiled coil. 7 WD repeats span residues 121–160 (QNESPVTAIKLHPSLAIVYVGTDTGRLIAYDILNYTIPLA), 164–212 (AHSK…GELK), 219–262 (AHDS…QSFS), 264–302 (HSEWVKSIDVLDEYILSGSLDSTLRLTHWPSGNGLSVGT), 325–365 (PYRD…LKPN), 385–424 (GHTSWVKDLKLRGDHLFSCSDDETIKCWDLNTGNCVKTWS), and 426–466 (IHNN…VKII).

This sequence belongs to the WD repeat LIS1/nudF family. As to quaternary structure, self-associates. Interacts with NDL1 and dynein.

Its subcellular location is the cytoplasm. The protein localises to the cytoskeleton. The protein resides in the spindle pole. Its function is as follows. Positively regulates the activity of the minus-end directed microtubule motor protein dynein. Plays a central role in positioning the mitotic spindle at the bud neck during cell division. Targets cytoplasmic dynein to microtubule plus ends, thereby promoting dynein-mediated microtubule sliding along the bud cortex and consequently the movement of the mitotic spindle to the bud neck. This Candida glabrata (strain ATCC 2001 / BCRC 20586 / JCM 3761 / NBRC 0622 / NRRL Y-65 / CBS 138) (Yeast) protein is Nuclear distribution protein PAC1.